Here is a 168-residue protein sequence, read N- to C-terminus: T-cell surface glycoprotein CD3 delta chain (168 aa).

An N-terminal signal peptide occupies residues methionine 1 to proline 21. At arginine 22–alanine 102 the chain is on the extracellular side. Cysteines 37 and 74 form a disulfide. Asparagine 38 and asparagine 56 each carry an N-linked (GlcNAc...) asparagine glycan. Residues glycine 103–alanine 123 form a helical membrane-spanning segment. At glycine 124–lysine 168 the chain is on the cytoplasmic side. Residues aspartate 135 to lysine 163 enclose the ITAM domain. A phosphotyrosine mark is found at tyrosine 146 and tyrosine 157.

As to quaternary structure, the TCR-CD3 complex is composed of a CD3D/CD3E and a CD3G/CD3E heterodimers that preferentially associate with TCRalpha and TCRbeta, respectively, to form TCRalpha/CD3E/CD3G and TCRbeta/CD3G/CD3E trimers. In turn, the hexamer interacts with CD3Z homodimer to form the TCR-CD3 complex. Alternatively, TCRalpha and TCRbeta can be replaced by TCRgamma and TCRdelta. Interacts with coreceptors CD4 and CD8. In terms of processing, phosphorylated on Tyr residues after T-cell receptor triggering by LCK in association with CD4/CD8. CD3D is mostly present on T-lymphocytes with its TCR-CD3 partners. Present also in fetal NK-cells.

The protein localises to the cell membrane. In terms of biological role, part of the TCR-CD3 complex present on T-lymphocyte cell surface that plays an essential role in adaptive immune response. When antigen presenting cells (APCs) activate T-cell receptor (TCR), TCR-mediated signals are transmitted across the cell membrane by the CD3 chains CD3D, CD3E, CD3G and CD3Z. All CD3 chains contain immunoreceptor tyrosine-based activation motifs (ITAMs) in their cytoplasmic domain. Upon TCR engagement, these motifs become phosphorylated by Src family protein tyrosine kinases LCK and FYN, resulting in the activation of downstream signaling pathways. In addition of this role of signal transduction in T-cell activation, CD3D plays an essential role in thymocyte differentiation. Indeed, participates in correct intracellular TCR-CD3 complex assembly and surface expression. In absence of a functional TCR-CD3 complex, thymocytes are unable to differentiate properly. Interacts with CD4 and CD8 and thus serves to establish a functional link between the TCR and coreceptors CD4 and CD8, which is needed for activation and positive selection of CD4 or CD8 T-cells. The protein is T-cell surface glycoprotein CD3 delta chain (CD3D) of Bos taurus (Bovine).